Consider the following 551-residue polypeptide: uncharacterized protein (551 aa).

It belongs to the GSP E family.

This is an uncharacterized protein from Methanocaldococcus jannaschii (strain ATCC 43067 / DSM 2661 / JAL-1 / JCM 10045 / NBRC 100440) (Methanococcus jannaschii).